A 325-amino-acid chain; its full sequence is tRNA N(3)-methylcytidine methyltransferase Mettl2 (325 aa).

S-adenosyl-L-methionine is bound by residues Trp96 and Tyr100. S-adenosyl-L-homocysteine-binding residues include Tyr100, His112, Glu138, Gly140, Asp165, Asp191, and Ile212. Gly140, Asp165, Asp191, and Ile212 together coordinate S-adenosyl-L-methionine.

The protein belongs to the methyltransferase superfamily. METL family. Interacts with Psn. In terms of tissue distribution, widely expressed. Expressed in ovaries, head, thorax and abdomen of adult flies, and in the CNS of third instar larvae. Isoform 2 is predominantly expressed in larvae and in adult tissues that have been tested.

Probable methyltransferase. In Drosophila melanogaster (Fruit fly), this protein is tRNA N(3)-methylcytidine methyltransferase Mettl2.